The sequence spans 406 residues: MIHTNLKKKFSCCVLVFLLFAVICVWKEKKKGSYYDSFKLQTKEFQVLKSLGKLAMGSDSQSVSSSSTQDPHRGRQTLGSLRGLAKAKPEASFQVWNKDSSSKNLIPRLQKIWKNYLSMNKYKVSYKGPGPGIKFSAEALRCHLRDHVNVSMVEVTDFPFNTSEWEGYLPKESIRTKAGPWGRCAVVSSAGSLKSSQLGREIDDHDAVLRFNGAPTANFQQDVGTKTTIRLMNSQLVTTEKRFLKDSLYNEGILIVWDPSVYHSDIPKWYQNPDYNFFNNYKTYRKLHPNQPFYILKPQMPWELWDILQEISPEEIQPNPPSSGMLGIIIMMTLCDQVDIYEFLPSKRKTDVCYYYQKFFDSACTMGAYHPLLYEKNLVKHLNQGTDEDIYLLGKATLPGFRTIHC.

Topologically, residues 1-9 are cytoplasmic; that stretch reads MIHTNLKKK. The chain crosses the membrane as a helical; Signal-anchor for type II membrane protein span at residues 10–26; that stretch reads FSCCVLVFLLFAVICVW. Topologically, residues 27 to 406 are lumenal; the sequence is KEKKKGSYYD…TLPGFRTIHC (380 aa). Disulfide bonds link cysteine 142/cysteine 406, cysteine 184/cysteine 335, and cysteine 353/cysteine 364. Asparagine 149 and asparagine 161 each carry an N-linked (GlcNAc...) asparagine glycan. Residues serine 189, asparagine 212, asparagine 233, 322–324, cysteine 353, tyrosine 354, threonine 365, tyrosine 369, histidine 370, and lysine 376 each bind substrate; that span reads SSG. Tyrosine 369 bears the Phosphotyrosine mark.

Belongs to the glycosyltransferase 29 family. In terms of assembly, monomer and homodimer. Post-translationally, N-glycosylated.

Its subcellular location is the golgi apparatus. The protein localises to the golgi stack membrane. The protein resides in the secreted. The catalysed reaction is a beta-D-galactoside + CMP-N-acetyl-beta-neuraminate = an N-acetyl-alpha-neuraminyl-(2-&gt;6)-beta-D-galactosyl derivative + CMP + H(+). Its pathway is protein modification; protein glycosylation. Its activity is regulated as follows. Inhibited by CTP. Functionally, transfers sialic acid from CMP-sialic acid to galactose-containing acceptor substrates. In B lymphocytes, generates neuraminidase-sensitive lymphocyte cell-surface differentiation antigens, such as CDw75, HB-6 and CD76. The protein is Beta-galactoside alpha-2,6-sialyltransferase 1 (ST6GAL1) of Homo sapiens (Human).